The following is a 1401-amino-acid chain: DNA-directed RNA polymerase subunit beta' (1401 aa).

4 residues coordinate Zn(2+): C70, C72, C85, and C88. Positions 460, 462, and 464 each coordinate Mg(2+). Zn(2+) is bound by residues C814, C888, C895, and C898. A disordered region spans residues 1369 to 1388; the sequence is RQKQKAVEQEGPSAEQATDN.

The protein belongs to the RNA polymerase beta' chain family. In terms of assembly, the RNAP catalytic core consists of 2 alpha, 1 beta, 1 beta' and 1 omega subunit. When a sigma factor is associated with the core the holoenzyme is formed, which can initiate transcription. Mg(2+) serves as cofactor. Requires Zn(2+) as cofactor.

It catalyses the reaction RNA(n) + a ribonucleoside 5'-triphosphate = RNA(n+1) + diphosphate. Its function is as follows. DNA-dependent RNA polymerase catalyzes the transcription of DNA into RNA using the four ribonucleoside triphosphates as substrates. The protein is DNA-directed RNA polymerase subunit beta' of Aliivibrio fischeri (strain ATCC 700601 / ES114) (Vibrio fischeri).